A 113-amino-acid chain; its full sequence is Cytochrome c (113 aa).

The heme c site is built by C21, C24, H25, and M90.

The protein belongs to the cytochrome c family. Post-translationally, binds 1 heme c group covalently per subunit.

The protein localises to the mitochondrion intermembrane space. Electron carrier protein. The oxidized form of the cytochrome c heme group can accept an electron from the heme group of the cytochrome c1 subunit of cytochrome reductase. Cytochrome c then transfers this electron to the cytochrome oxidase complex, the final protein carrier in the mitochondrial electron-transport chain. The protein is Cytochrome c (cytC) of Dictyostelium discoideum (Social amoeba).